A 729-amino-acid polypeptide reads, in one-letter code: Catalase-peroxidase (729 aa).

A cross-link (tryptophyl-tyrosyl-methioninium (Trp-Tyr) (with M-244)) is located at residues 95 to 218 (WHSAGTYRGA…LAAVEMGLVY (124 aa)). The active-site Proton acceptor is His-96. The segment at residues 218-244 (YVNPEGPHGHPDPVASGPDVRDTFARM) is a cross-link (tryptophyl-tyrosyl-methioninium (Tyr-Met) (with W-95)). A heme b-binding site is contributed by His-259.

It belongs to the peroxidase family. Peroxidase/catalase subfamily. As to quaternary structure, homodimer or homotetramer. Requires heme b as cofactor. In terms of processing, formation of the three residue Trp-Tyr-Met cross-link is important for the catalase, but not the peroxidase activity of the enzyme.

The enzyme catalyses H2O2 + AH2 = A + 2 H2O. It catalyses the reaction 2 H2O2 = O2 + 2 H2O. Functionally, bifunctional enzyme with both catalase and broad-spectrum peroxidase activity. This chain is Catalase-peroxidase, found in Synechococcus sp. (strain CC9605).